A 331-amino-acid polypeptide reads, in one-letter code: Adenosine deaminase (331 aa).

Residues His12 and His14 each contribute to the Zn(2+) site. Substrate is bound by residues His14, Asp16, and Gly170. A Zn(2+)-binding site is contributed by His197. Glu200 acts as the Proton donor in catalysis. A Zn(2+)-binding site is contributed by Asp278. Asp279 contributes to the substrate binding site.

The protein belongs to the metallo-dependent hydrolases superfamily. Adenosine and AMP deaminases family. Adenosine deaminase subfamily. Requires Zn(2+) as cofactor.

The catalysed reaction is adenosine + H2O + H(+) = inosine + NH4(+). The enzyme catalyses 2'-deoxyadenosine + H2O + H(+) = 2'-deoxyinosine + NH4(+). In terms of biological role, catalyzes the hydrolytic deamination of adenosine and 2-deoxyadenosine. This chain is Adenosine deaminase, found in Shewanella denitrificans (strain OS217 / ATCC BAA-1090 / DSM 15013).